The sequence spans 619 residues: 1-deoxy-D-xylulose-5-phosphate synthase (619 aa).

Thiamine diphosphate is bound by residues histidine 80 and 121-123; that span reads GHS. Position 152 (aspartate 152) interacts with Mg(2+). Thiamine diphosphate-binding positions include 153 to 154, asparagine 181, tyrosine 288, and glutamate 370; that span reads GA. Asparagine 181 is a binding site for Mg(2+).

This sequence belongs to the transketolase family. DXPS subfamily. Homodimer. It depends on Mg(2+) as a cofactor. Thiamine diphosphate serves as cofactor.

The enzyme catalyses D-glyceraldehyde 3-phosphate + pyruvate + H(+) = 1-deoxy-D-xylulose 5-phosphate + CO2. Its pathway is metabolic intermediate biosynthesis; 1-deoxy-D-xylulose 5-phosphate biosynthesis; 1-deoxy-D-xylulose 5-phosphate from D-glyceraldehyde 3-phosphate and pyruvate: step 1/1. Functionally, catalyzes the acyloin condensation reaction between C atoms 2 and 3 of pyruvate and glyceraldehyde 3-phosphate to yield 1-deoxy-D-xylulose-5-phosphate (DXP). The chain is 1-deoxy-D-xylulose-5-phosphate synthase from Yersinia pseudotuberculosis serotype I (strain IP32953).